A 430-amino-acid polypeptide reads, in one-letter code: Adenylosuccinate synthetase (430 aa).

GTP contacts are provided by residues 12–18 (GDEGKGK) and 40–42 (GHT). Aspartate 13 functions as the Proton acceptor in the catalytic mechanism. Aspartate 13 and glycine 40 together coordinate Mg(2+). IMP contacts are provided by residues 13 to 16 (DEGK), 38 to 41 (NAGH), threonine 130, arginine 144, glutamine 224, and threonine 239. The active-site Proton donor is the histidine 41. The tract at residues 277 to 298 (PFPTEQDNETGRKIGERGREFG) is disordered. A compositionally biased stretch (basic and acidic residues) spans 285 to 296 (ETGRKIGERGRE). 299-305 (TNTGRPR) is a substrate binding site. An IMP-binding site is contributed by arginine 303. Residues arginine 305, 331 to 333 (KLD), and 413 to 415 (STS) each bind GTP.

It belongs to the adenylosuccinate synthetase family. As to quaternary structure, homodimer. Mg(2+) is required as a cofactor.

The protein localises to the cytoplasm. The catalysed reaction is IMP + L-aspartate + GTP = N(6)-(1,2-dicarboxyethyl)-AMP + GDP + phosphate + 2 H(+). It functions in the pathway purine metabolism; AMP biosynthesis via de novo pathway; AMP from IMP: step 1/2. Plays an important role in the de novo pathway of purine nucleotide biosynthesis. Catalyzes the first committed step in the biosynthesis of AMP from IMP. The chain is Adenylosuccinate synthetase from Bradyrhizobium sp. (strain BTAi1 / ATCC BAA-1182).